The sequence spans 236 residues: 3-oxoacyl-[acyl-carrier-protein] reductase (236 aa).

The residue at position 1 (M1) is an N-acetylmethionine. NADP(+)-binding positions include 11–14 and 34–35; these read SRGI and RN. At K40 the chain carries N6-acetyllysine. Residues D56 and 83-85 contribute to the NADP(+) site; that span reads AAG. The residue at position 96 (K96) is an N6-acetyllysine. Substrate is bound at residue S134. NADP(+) is bound by residues Y147, K151, and 180–182; that span reads IRT. Y147 (proton acceptor) is an active-site residue. K194 is modified (N6-acetyllysine).

It belongs to the short-chain dehydrogenases/reductases (SDR) family. In terms of assembly, homotetramer (in vitro). Heterotetramer with HSD17B8; contains two molecules each of HSD17B8 and CBR4. Does not form homotetramers when HSD17B8 is coexpressed, only heterotetramers (in vitro).

It is found in the mitochondrion matrix. It catalyses the reaction a (3R)-hydroxyacyl-[ACP] + NADP(+) = a 3-oxoacyl-[ACP] + NADPH + H(+). It carries out the reaction a quinone + NADPH + H(+) = a quinol + NADP(+). Its pathway is lipid metabolism; fatty acid biosynthesis. In terms of biological role, component of the heterotetramer complex KAR (3-ketoacyl-[acyl carrier protein] reductase or 3-ketoacyl-[ACP] reductase) that forms part of the mitochondrial fatty acid synthase (mtFAS). Beta-subunit of the KAR heterotetramer complex, responsible for the 3-ketoacyl-ACP reductase activity of the mtFAS, reduces 3-oxoacyl-[ACP] to (3R)-hydroxyacyl-[ACP] in a NADPH-dependent manner with no chain length preference, thereby participating in mitochondrial fatty acid biosynthesis. The homotetramer has NADPH-dependent quinone reductase activity (in vitro), hence could play a role in protection against cytotoxicity of exogenous quinones. As a heterotetramer, it can also reduce 9,10-phenanthrenequinone, 1,4-benzoquinone and various other o-quinones and p-quinones (in vitro). This Mus musculus (Mouse) protein is 3-oxoacyl-[acyl-carrier-protein] reductase (Cbr4).